A 335-amino-acid polypeptide reads, in one-letter code: Glyceraldehyde-3-phosphate dehydrogenase 2 (335 aa).

NAD(+)-binding positions include Arg12 to Ile13, Asp35, Arg79, and Ser121. D-glyceraldehyde 3-phosphate-binding positions include Ser152–Thr154 and Thr183. The active-site Nucleophile is the Cys153. NAD(+) is bound at residue Asn184. D-glyceraldehyde 3-phosphate contacts are provided by residues Arg198, Thr211–Gly212, and Arg234. Residue Asn316 coordinates NAD(+).

This sequence belongs to the glyceraldehyde-3-phosphate dehydrogenase family. Homotetramer.

It localises to the cytoplasm. It carries out the reaction D-glyceraldehyde 3-phosphate + phosphate + NAD(+) = (2R)-3-phospho-glyceroyl phosphate + NADH + H(+). Its pathway is carbohydrate degradation; glycolysis; pyruvate from D-glyceraldehyde 3-phosphate: step 1/5. Inhibited by pentalenolactone. Its function is as follows. Catalyzes the oxidative phosphorylation of glyceraldehyde 3-phosphate (G3P) to 1,3-bisphosphoglycerate (BPG) using the cofactor NAD. The first reaction step involves the formation of a hemiacetal intermediate between G3P and a cysteine residue, and this hemiacetal intermediate is then oxidized to a thioester, with concomitant reduction of NAD to NADH. The reduced NADH is then exchanged with the second NAD, and the thioester is attacked by a nucleophilic inorganic phosphate to produce BPG. This chain is Glyceraldehyde-3-phosphate dehydrogenase 2 (gap2), found in Streptomyces avermitilis (strain ATCC 31267 / DSM 46492 / JCM 5070 / NBRC 14893 / NCIMB 12804 / NRRL 8165 / MA-4680).